Reading from the N-terminus, the 228-residue chain is Ribose-5-phosphate isomerase A (228 aa).

Substrate-binding positions include 29–32, 85–88, and 98–101; these read TGST, DGAD, and KGGG. E107 functions as the Proton acceptor in the catalytic mechanism. Residue K125 participates in substrate binding.

Belongs to the ribose 5-phosphate isomerase family. As to quaternary structure, homodimer.

It carries out the reaction aldehydo-D-ribose 5-phosphate = D-ribulose 5-phosphate. The protein operates within carbohydrate degradation; pentose phosphate pathway; D-ribose 5-phosphate from D-ribulose 5-phosphate (non-oxidative stage): step 1/1. In terms of biological role, catalyzes the reversible conversion of ribose-5-phosphate to ribulose 5-phosphate. The sequence is that of Ribose-5-phosphate isomerase A from Staphylococcus aureus (strain MRSA252).